A 536-amino-acid chain; its full sequence is Multicopper oxidase CueO (536 aa).

The tat-type signal signal peptide spans 1 to 28; that stretch reads MLRRDFLKYSVALGVASALPLWSRAAFA. Plastocyanin-like domains lie at 53–165, 229–295, and 424–536; these read KAGQ…IEDD, GWLR…AFDL, and FHNA…GFTV. The Cu cation site is built by histidine 101, histidine 103, histidine 141, and histidine 143. Histidine 463, histidine 466, histidine 468, histidine 519, cysteine 520, histidine 521, and histidine 525 together coordinate Cu cation.

It belongs to the multicopper oxidase family. In terms of assembly, monomer. Cu cation serves as cofactor. Predicted to be exported by the Tat system. The position of the signal peptide cleavage has not been experimentally proven.

The protein resides in the periplasm. It carries out the reaction 4 Cu(+) + O2 + 4 H(+) = 4 Cu(2+) + 2 H2O. In terms of biological role, multicopper oxidase involved in copper homeostasis and copper tolerance under both aerobic and anaerobic conditions. Is responsible for the oxidation of Cu(+) to the less harmful Cu(2+) in the periplasm, thereby preventing Cu(+) from entering the cytoplasm. This chain is Multicopper oxidase CueO (cueO), found in Salmonella typhimurium (strain LT2 / SGSC1412 / ATCC 700720).